We begin with the raw amino-acid sequence, 151 residues long: Arginine repressor (151 aa).

It belongs to the ArgR family. As to quaternary structure, homohexamer.

It localises to the cytoplasm. Its pathway is amino-acid biosynthesis; L-arginine biosynthesis [regulation]. In terms of biological role, regulates arginine biosynthesis genes. This chain is Arginine repressor (argR), found in Haemophilus influenzae (strain ATCC 51907 / DSM 11121 / KW20 / Rd).